The primary structure comprises 955 residues: Valine--tRNA ligase (955 aa).

Residues 41-51 (PNITGSLHMGH) carry the 'HIGH' region motif. The short motif at 554–558 (KMSKS) is the 'KMSKS' region element. Lysine 557 is an ATP binding site. Residues 926-946 (QEKNKLLKLNEINLKLSEQIK) are a coiled coil.

It belongs to the class-I aminoacyl-tRNA synthetase family. ValS type 1 subfamily. In terms of assembly, monomer.

The protein localises to the cytoplasm. The catalysed reaction is tRNA(Val) + L-valine + ATP = L-valyl-tRNA(Val) + AMP + diphosphate. Functionally, catalyzes the attachment of valine to tRNA(Val). As ValRS can inadvertently accommodate and process structurally similar amino acids such as threonine, to avoid such errors, it has a 'posttransfer' editing activity that hydrolyzes mischarged Thr-tRNA(Val) in a tRNA-dependent manner. The protein is Valine--tRNA ligase of Buchnera aphidicola subsp. Acyrthosiphon pisum (strain APS) (Acyrthosiphon pisum symbiotic bacterium).